Consider the following 476-residue polypeptide: Sulfate adenylyltransferase subunit 1 (476 aa).

One can recognise a tr-type G domain in the interval 24 to 228; sequence KSLLRFLTCG…MAWYQGPTLL (205 aa). Positions 33–40 are G1; it reads GSVDDGKS. Residue 33–40 participates in GTP binding; the sequence is GSVDDGKS. The tract at residues 91-95 is G2; it reads GITID. Residues 112–115 are G3; that stretch reads DTPG. Residues 112-116 and 167-170 each bind GTP; these read DTPGH and NKMD. The interval 167–170 is G4; it reads NKMD. The interval 205-207 is G5; that stretch reads SAL.

It belongs to the TRAFAC class translation factor GTPase superfamily. Classic translation factor GTPase family. CysN/NodQ subfamily. Heterodimer composed of CysD, the smaller subunit, and CysN.

The enzyme catalyses sulfate + ATP + H(+) = adenosine 5'-phosphosulfate + diphosphate. Its pathway is sulfur metabolism; hydrogen sulfide biosynthesis; sulfite from sulfate: step 1/3. In terms of biological role, with CysD forms the ATP sulfurylase (ATPS) that catalyzes the adenylation of sulfate producing adenosine 5'-phosphosulfate (APS) and diphosphate, the first enzymatic step in sulfur assimilation pathway. APS synthesis involves the formation of a high-energy phosphoric-sulfuric acid anhydride bond driven by GTP hydrolysis by CysN coupled to ATP hydrolysis by CysD. This is Sulfate adenylyltransferase subunit 1 from Vibrio vulnificus (strain CMCP6).